The primary structure comprises 499 residues: Probable alpha-L-arabinofuranosidase B (499 aa).

The signal sequence occupies residues 1-18 (MFSRRNLVALGLAATVSA). A catalytic region spans residues 19-335 (GPCDIYEAGD…ENIVAAKYVS (317 aa)). 3 cysteine pairs are disulfide-bonded: Cys21–Cys31, Cys81–Cys86, and Cys176–Cys177. Asn83 carries an N-linked (GlcNAc...) asparagine glycan. Residue Asn202 is glycosylated (N-linked (GlcNAc...) asparagine). Asp219 is a substrate binding site. Glu221 (nucleophile) is an active-site residue. Residues Asn222, Asn223, and Gly296 each coordinate substrate. The active-site Proton donor is the Asp297. An ABD region spans residues 336 to 499 (GSLVSGPSFT…SFEIETAFAS (164 aa)). Cys401 and Cys439 are oxidised to a cystine. 8 residues coordinate substrate: His416, Asn418, Phe419, Asp435, His463, Asp465, Leu468, and Asp488.

Belongs to the glycosyl hydrolase 54 family.

It is found in the secreted. It catalyses the reaction Hydrolysis of terminal non-reducing alpha-L-arabinofuranoside residues in alpha-L-arabinosides.. The protein operates within glycan metabolism; L-arabinan degradation. In terms of biological role, alpha-L-arabinofuranosidase involved in the degradation of arabinoxylan, a major component of plant hemicellulose. Able to hydrolyze 1,5-, 1,3- and 1,2-alpha-linkages not only in L-arabinofuranosyl oligosaccharides, but also in polysaccharides containing terminal non-reducing L-arabinofuranoses in side chains, like L-arabinan, arabinogalactan and arabinoxylan. This chain is Probable alpha-L-arabinofuranosidase B (abfB), found in Aspergillus niger (strain ATCC MYA-4892 / CBS 513.88 / FGSC A1513).